Consider the following 156-residue polypeptide: 6,7-dimethyl-8-ribityllumazine synthase (156 aa).

Residues phenylalanine 25, 59–61, and 83–85 each bind 5-amino-6-(D-ribitylamino)uracil; these read AFE and AVI. 88–89 contributes to the (2S)-2-hydroxy-3-oxobutyl phosphate binding site; sequence AT. Histidine 91 functions as the Proton donor in the catalytic mechanism. Phenylalanine 116 lines the 5-amino-6-(D-ribitylamino)uracil pocket. Arginine 130 provides a ligand contact to (2S)-2-hydroxy-3-oxobutyl phosphate.

It belongs to the DMRL synthase family.

The enzyme catalyses (2S)-2-hydroxy-3-oxobutyl phosphate + 5-amino-6-(D-ribitylamino)uracil = 6,7-dimethyl-8-(1-D-ribityl)lumazine + phosphate + 2 H2O + H(+). Its pathway is cofactor biosynthesis; riboflavin biosynthesis; riboflavin from 2-hydroxy-3-oxobutyl phosphate and 5-amino-6-(D-ribitylamino)uracil: step 1/2. Catalyzes the formation of 6,7-dimethyl-8-ribityllumazine by condensation of 5-amino-6-(D-ribitylamino)uracil with 3,4-dihydroxy-2-butanone 4-phosphate. This is the penultimate step in the biosynthesis of riboflavin. The protein is 6,7-dimethyl-8-ribityllumazine synthase of Nitratidesulfovibrio vulgaris (strain DSM 19637 / Miyazaki F) (Desulfovibrio vulgaris).